A 536-amino-acid chain; its full sequence is Heparanase-like protein 3 (536 aa).

Positions 1–24 are cleaved as a signal peptide; sequence MAYRQILAIVLFLCVFQFLDCTVS. 4 N-linked (GlcNAc...) asparagine glycosylation sites follow: asparagine 30, asparagine 122, asparagine 176, and asparagine 191. The Proton donor role is filled by glutamate 202. Residues asparagine 265 and asparagine 308 are each glycosylated (N-linked (GlcNAc...) asparagine). Glutamate 319 functions as the Nucleophile in the catalytic mechanism. 4 N-linked (GlcNAc...) asparagine glycosylation sites follow: asparagine 370, asparagine 427, asparagine 438, and asparagine 510.

It belongs to the glycosyl hydrolase 79 family.

The protein localises to the lysosome membrane. The protein resides in the secreted. Endoglycosidase which is a cell surface and extracellular matrix-degrading enzyme. Cleaves heparan sulfate proteoglycans (HSPGs) into heparan sulfate side chains and core proteoglycans. This is Heparanase-like protein 3 from Arabidopsis thaliana (Mouse-ear cress).